A 186-amino-acid chain; its full sequence is Elongation factor P (186 aa).

It belongs to the elongation factor P family.

The protein localises to the cytoplasm. It functions in the pathway protein biosynthesis; polypeptide chain elongation. Its function is as follows. Involved in peptide bond synthesis. Stimulates efficient translation and peptide-bond synthesis on native or reconstituted 70S ribosomes in vitro. Probably functions indirectly by altering the affinity of the ribosome for aminoacyl-tRNA, thus increasing their reactivity as acceptors for peptidyl transferase. The polypeptide is Elongation factor P (Streptococcus mutans serotype c (strain ATCC 700610 / UA159)).